The sequence spans 701 residues: Acetyl-coenzyme A synthetase, cytoplasmic (701 aa).

The interval 1 to 41 (MGLPEERVRSGSGSRGQEEAGAGGRARSWSPPPEVSRSAHV) is disordered. The segment at 1–107 (MGLPEERVRS…GATTNICYNV (107 aa)) is interaction with TFEB. Phosphoserine is present on residues Ser-28, Ser-30, and Ser-36. Residue 219–222 (RGEK) coordinates CoA. Ser-263, Ser-265, and Ser-267 each carry phosphoserine. Thr-363 is a binding site for CoA. Position 418 is an N6-acetyllysine (Lys-418). ATP contacts are provided by residues 439-441 (GEP), 463-468 (DTFWQT), Asp-552, and Arg-567. Residues Ser-575 and Arg-636 each contribute to the CoA site. The Nuclear localization signal signature appears at 656 to 668 (KTRSGKIMRRVLR). Ser-659 is subject to Phosphoserine; by AMPK. Lys-661 is subject to N6-acetyllysine.

The protein belongs to the ATP-dependent AMP-binding enzyme family. In terms of assembly, monomer. Interacts with TFEB. AMPK-mediated phosphorylated form at Ser-659 interacts with KPNA1; this interaction results in nuclear translocation of ACSS2. Interacts with the 'Thr-172' phosphorylated form of PRKAA2. Interacts with CREBBP. Reversibly acetylated at Lys-661. The acetyl-CoA synthase activity is inhibited by acetylation and activated by deacetylation mediated by the deacetylases SIRT1 and SIRT3. Post-translationally, glucose deprivation results in its AMPK-dependent phosphorylation at Ser-659, which leads to exposure of its nuclear localization signal, required for its interaction with KPNA1 and subsequent translocation to the nucleus.

It is found in the cytoplasm. It localises to the cytosol. The protein resides in the nucleus. It catalyses the reaction acetate + ATP + CoA = acetyl-CoA + AMP + diphosphate. The catalysed reaction is propanoate + ATP + CoA = propanoyl-CoA + AMP + diphosphate. Inhibited by acetylation at Lys-661 and activated by deacetylation mediated by the deacetylases SIRT1 and SIRT3. Functionally, catalyzes the synthesis of acetyl-CoA from short-chain fatty acids. Acetate is the preferred substrate. Can also utilize propionate with a much lower affinity. Nuclear ACSS2 promotes glucose deprivation-induced lysosomal biogenesis and autophagy, tumor cell survival and brain tumorigenesis. Glucose deprivation results in AMPK-mediated phosphorylation of ACSS2 leading to its translocation to the nucleus where it binds to TFEB and locally produces acetyl-CoA for histone acetylation in the promoter regions of TFEB target genes thereby activating their transcription. The regulation of genes associated with autophagy and lysosomal activity through ACSS2 is important for brain tumorigenesis and tumor survival. Acts as a chromatin-bound transcriptional coactivator that up-regulates histone acetylation and expression of neuronal genes. Can be recruited to the loci of memory-related neuronal genes to maintain a local acetyl-CoA pool, providing the substrate for histone acetylation and promoting the expression of specific genes, which is essential for maintaining long-term spatial memory. This is Acetyl-coenzyme A synthetase, cytoplasmic (ACSS2) from Homo sapiens (Human).